Reading from the N-terminus, the 732-residue chain is Catalase-peroxidase (732 aa).

The tryptophyl-tyrosyl-methioninium (Trp-Tyr) (with M-245) cross-link spans 96–219 (WHSAGTYRIG…LGAVQMGLIY (124 aa)). The active-site Proton acceptor is the histidine 97. Residues 219–245 (YVNPEGPNGHPDPVASGRDIRETFGRM) constitute a cross-link (tryptophyl-tyrosyl-methioninium (Tyr-Met) (with W-96)). Histidine 260 is a binding site for heme b.

This sequence belongs to the peroxidase family. Peroxidase/catalase subfamily. As to quaternary structure, homodimer or homotetramer. It depends on heme b as a cofactor. Post-translationally, formation of the three residue Trp-Tyr-Met cross-link is important for the catalase, but not the peroxidase activity of the enzyme.

The enzyme catalyses H2O2 + AH2 = A + 2 H2O. It catalyses the reaction 2 H2O2 = O2 + 2 H2O. Bifunctional enzyme with both catalase and broad-spectrum peroxidase activity. This chain is Catalase-peroxidase, found in Acaryochloris marina (strain MBIC 11017).